The chain runs to 424 residues: Tubulin-specific chaperone cofactor E-like protein (424 aa).

A phosphoserine mark is found at Ser-18 and Ser-41. LRR repeat units lie at residues 73–98 (CAHV…IVSN), 99–123 (VPQL…TCAG), 124–147 (SFSG…HTIL), 150–172 (LPDL…PSVC), 173–197 (CHSL…KLGV), 199–224 (FPSL…SLAR), and 226–250 (FPNL…KLNS). One can recognise an LRRCT domain in the interval 262-303 (IPLLQPYTTEERRKLVVARLPSVSKLNGSVVTDGEREDSERF). The 91-residue stretch at 334 to 424 (AEVDLRPQSS…DKIFVESKTK (91 aa)) folds into the Ubiquitin-like domain. Positions 350–375 (FNDQVEEVSIRLDQTVAELKRQLKTL) form a coiled coil.

The protein resides in the cytoplasm. It localises to the cytoskeleton. In terms of biological role, acts as a regulator of tubulin stability. The sequence is that of Tubulin-specific chaperone cofactor E-like protein (Tbcel) from Rattus norvegicus (Rat).